The sequence spans 540 residues: Flavin-dependent halogenase ptaM (540 aa).

A signal peptide spans 1–21; sequence MSVPAQTSVLIVGGGPAGSYA. Gly14, Ala17, and Glu47 together coordinate FAD. N-linked (GlcNAc...) asparagine glycosylation is found at Asn159, Asn192, Asn204, and Asn243. Chloride is bound by residues Ser330 and Gly331. Residues Asn480, Asn491, and Asn523 are each glycosylated (N-linked (GlcNAc...) asparagine).

This sequence belongs to the flavin-dependent halogenase family.

It functions in the pathway secondary metabolite biosynthesis. Its function is as follows. Flavin-dependent halogenase; part of the gene cluster that mediates the biosynthesis of pestheic acid, a diphenyl ether which is a biosynthetic precursor of the unique chloropupukeananes. The biosynthesis initiates from condensation of acetate and malonate units catalyzed by the non-reducing PKS ptaA. As the ptaA protein is TE/CLC domain-deficient, hydrolysis and Claisen cyclization of the polyketide could be catalyzed by ptaB containing a beta-lactamase domain. The ptaB protein might hydrolyze the thioester bond between the ACP of ptaA and the intermediate to release atrochrysone carboxylic acid, which is spontaneously dehydrated to form endocrocin anthrone. Endocrocin anthrone is then converted to endocrocin, catalyzed by the anthrone oxygenase ptaC. Spontaneous decarboxylation of endocrocin occurs to generate emodin. An O-methyltransferase (ptaH or ptaI) could methylate emodin to form physcion. PtaJ could then catalyze the oxidative cleavage of physcion, and rotation of the intermediate could then afford desmethylisosulochrin. PtaF, a putative NADH-dependent oxidoreductase, might also participate in the oxidative cleavage step. Desmethylisosulochrin is then transformed by another O-methyltransferase (ptaH or ptaI) to form isosulochrin. Chlorination of isosulochrin by ptaM in the cyclohexadienone B ring then produces chloroisosulochrin. PtaE is responsible for the oxidative coupling reactions of both benzophenones isosulochrin and chloroisosulochrin to RES-1214-1 and pestheic acid respectively, regardless of chlorination. The protein is Flavin-dependent halogenase ptaM of Pestalotiopsis fici (strain W106-1 / CGMCC3.15140).